The sequence spans 74 residues: Protein A30 homolog (74 aa).

Belongs to the chordopoxvirinae A30 family. As to quaternary structure, interacts with protein G7; the interaction stabilizes both proteins. Post-translationally, phosphorylated by viral F10 kinase.

Required for the association between the dense viroplasm and the viral membranes to form the mature virion (MV). The protein is Protein A30 homolog of Fowlpox virus (strain NVSL) (FPV).